A 162-amino-acid polypeptide reads, in one-letter code: Cyclic pyranopterin monophosphate synthase (162 aa).

Substrate-binding positions include 75–77 (LCH) and 113–114 (ME). Aspartate 128 is an active-site residue.

This sequence belongs to the MoaC family. Homohexamer; trimer of dimers.

It catalyses the reaction (8S)-3',8-cyclo-7,8-dihydroguanosine 5'-triphosphate = cyclic pyranopterin phosphate + diphosphate. Its pathway is cofactor biosynthesis; molybdopterin biosynthesis. Catalyzes the conversion of (8S)-3',8-cyclo-7,8-dihydroguanosine 5'-triphosphate to cyclic pyranopterin monophosphate (cPMP). The chain is Cyclic pyranopterin monophosphate synthase from Burkholderia cenocepacia (strain HI2424).